The primary structure comprises 1023 residues: 2-oxoglutarate dehydrogenase complex component E1 (1023 aa).

The transit peptide at Met-1–Tyr-40 directs the protein to the mitochondrion. Residue Lys-74 is modified to N6-succinyllysine. Residue Ser-100 is modified to Phosphoserine. Ca(2+)-binding residues include His-143, Asp-156, and Asp-158. A thiamine diphosphate-binding site is contributed by Arg-312. Lys-401 bears the N6-acetyllysine mark. Residues Asp-411, Asn-444, and Ile-446 each contribute to the thiamine diphosphate site. Residues Asp-411, Asn-444, and Ile-446 each contribute to the Mg(2+) site. A Glycyl lysine isopeptide (Lys-Gly) (interchain with G-Cter in ubiquitin) cross-link involves residue Lys-534. Lys-564 carries the N6-succinyllysine modification. Gln-676 is a thiamine diphosphate binding site. The residue at position 970 (Lys-970) is an N6-acetyllysine.

Belongs to the alpha-ketoglutarate dehydrogenase family. As to quaternary structure, homodimer. The 2-oxoglutarate dehydrogenase complex is composed of OGDH (2-oxoglutarate dehydrogenase; E1), DLST (dihydrolipoamide succinyltransferase; E2), DLD (dihydrolipoamide dehydrogenase; E3) and the assembly factor KGD4. It contains multiple copies of the three enzymatic components (E1, E2 and E3). In the nucleus, the 2-oxoglutarate dehydrogenase complex associates with KAT2A. Interacts with ABHD11; this interaction maintains the functional lipoylation of the 2-oxoglutarate dehydrogenase complex. Thiamine diphosphate is required as a cofactor. It depends on Mg(2+) as a cofactor.

It is found in the mitochondrion. The protein resides in the nucleus. It catalyses the reaction N(6)-[(R)-lipoyl]-L-lysyl-[protein] + 2-oxoglutarate + H(+) = N(6)-[(R)-S(8)-succinyldihydrolipoyl]-L-lysyl-[protein] + CO2. Its activity is regulated as follows. Calcium ions and ADP stimulate, whereas ATP and NADH reduce catalytic activity. 2-oxoglutarate dehydrogenase (E1o) component of the 2-oxoglutarate dehydrogenase complex (OGDHC). Participates in the first step, rate limiting for the overall conversion of 2-oxoglutarate to succinyl-CoA and CO(2) catalyzed by the whole OGDHC. Catalyzes the irreversible decarboxylation of 2-oxoglutarate (alpha-ketoglutarate) via the thiamine diphosphate (ThDP) cofactor and subsequent transfer of the decarboxylated acyl intermediate on an oxidized dihydrolipoyl group that is covalently amidated to the E2 enzyme (dihydrolipoyllysine-residue succinyltransferase or DLST). Plays a key role in the Krebs (citric acid) cycle, which is a common pathway for oxidation of fuel molecules, including carbohydrates, fatty acids, and amino acids. Can catalyze the decarboxylation of 2-oxoadipate in vitro, but at a much lower rate than 2-oxoglutarate. Mainly active in the mitochondrion. A fraction of the 2-oxoglutarate dehydrogenase complex also localizes in the nucleus and is required for lysine succinylation of histones: associates with KAT2A on chromatin and provides succinyl-CoA to histone succinyltransferase KAT2A. This is 2-oxoglutarate dehydrogenase complex component E1 from Pongo abelii (Sumatran orangutan).